The chain runs to 609 residues: mRNA-decapping enzyme 1B (609 aa).

Position 2 is an N-acetylalanine (alanine 2). Position 147 is a phosphoserine (serine 147). The residue at position 191 (tyrosine 191) is a Phosphotyrosine. Disordered regions lie at residues 201 to 222 and 243 to 264; these read PVKP…LDPE and TVEP…LPIR. Over residues 205–219 the composition is skewed to polar residues; sequence SENQQQRIPQPNQTL. 2 positions are modified to phosphoserine: serine 272 and serine 333. Disordered stretches follow at residues 326-345 and 359-438; these read TGPV…GVQN and TPGA…SSGV. Over residues 336 to 345 the composition is skewed to polar residues; it reads NIGTSRGVQN. The span at 368–378 shows a compositional bias: low complexity; sequence PSTPAPASSAA. Threonine 389 is modified (phosphothreonine). Positions 418-438 are enriched in polar residues; the sequence is QSTLPRQTLPISGNQTGSSGV. Residues serine 440 and serine 503 each carry the phosphoserine modification.

It belongs to the DCP1 family. In terms of assembly, interacts with DCP1A.

The protein resides in the cytoplasm. It is found in the nucleus. The enzyme catalyses a 5'-end (N(7)-methyl 5'-triphosphoguanosine)-ribonucleoside in mRNA + H2O = N(7)-methyl-GDP + a 5'-end phospho-ribonucleoside in mRNA + 2 H(+). Functionally, may play a role in the degradation of mRNAs, both in normal mRNA turnover and in nonsense-mediated mRNA decay. May remove the 7-methyl guanine cap structure from mRNA molecules, yielding a 5'-phosphorylated mRNA fragment and 7m-GDP. This Pongo abelii (Sumatran orangutan) protein is mRNA-decapping enzyme 1B (DCP1B).